The sequence spans 98 residues: Class II hydrophobin 1 (98 aa).

Residues 1–16 (MQFFTTVVLFAAAAMA) form the signal peptide. 4 disulfides stabilise this stretch: C29–C79, C39–C70, C40–C52, and C80–C92.

The protein belongs to the cerato-ulmin hydrophobin family. In terms of assembly, homodimer. Homodimers further self-assemble to form highly ordered films at water-air interfaces through intermolecular interactions. As to expression, expressed in mycelium, conidiating mycelium and aerial hyphae.

It localises to the secreted. The protein localises to the cell wall. Aerial growth, conidiation, and dispersal of filamentous fungi in the environment rely upon a capability of their secreting small amphipathic proteins called hydrophobins (HPBs) with low sequence identity. Class I can self-assemble into an outermost layer of rodlet bundles on aerial cell surfaces, conferring cellular hydrophobicity that supports fungal growth, development and dispersal; whereas Class II form highly ordered films at water-air interfaces through intermolecular interactions but contribute nothing to the rodlet structure. Hyd1 is a class II hydrophobin that plays probably a role during conidiophore development and in intraspecific signaling or hyphal fusion. Hyd1 and Hyd3 are jointly required for conidial hydrophobicity and dispersal, but seem not to be involved in mycelia hydrophobicity. Inhibits conidial germination in environments not suitable for mycelial growth. Not necessary for root adhesion and colonization. This is Class II hydrophobin 1 from Bionectria ochroleuca (Gliocladium roseum).